Here is a 497-residue protein sequence, read N- to C-terminus: NAD(P)H-quinone oxidoreductase chain 4, chloroplastic (497 aa).

The next 14 membrane-spanning stretches (helical) occupy residues 4–24 (FPWLTLVVILPIAGGSLIFLF), 35–55 (YTVCICLIDLLLTTYAFCYHF), 84–104 (GLSIGPILLTGFITTLATLAA), 111–131 (CKLFYFLMLAMYSGQIGPFSS), 134–154 (ILLFFIMWELELIPVYLLLAM), 167–187 (FILYTAGSSVFLLMATLGIGL), 208–228 (ALEIIVYIGFLIAFAVKSPII), 242–262 (HYSTCMLLAGILLKMGAYGLV), 274–294 (SIFCPWLMILGSIQIIYAASA), 305–325 (IAYSSVSHMGFLIIGIGSISD), 330–350 (GAILQIISHGFIGAALFFLSG), 386–406 (LALPGMSGFFAELIVFWGIIT), 411–431 (FLIMKILITFVTAIGMILTPI), and 463–483 (FISISILIPIIGIGIYPDFIF).

This sequence belongs to the complex I subunit 4 family.

The protein localises to the plastid. The protein resides in the chloroplast thylakoid membrane. The enzyme catalyses a plastoquinone + NADH + (n+1) H(+)(in) = a plastoquinol + NAD(+) + n H(+)(out). The catalysed reaction is a plastoquinone + NADPH + (n+1) H(+)(in) = a plastoquinol + NADP(+) + n H(+)(out). This chain is NAD(P)H-quinone oxidoreductase chain 4, chloroplastic (ndhD), found in Lotus japonicus (Lotus corniculatus var. japonicus).